Consider the following 577-residue polypeptide: Arginine--tRNA ligase (577 aa).

The 'HIGH' region motif lies at 122 to 132 (PNVAKEMHVGH).

It belongs to the class-I aminoacyl-tRNA synthetase family. Monomer.

The protein resides in the cytoplasm. The enzyme catalyses tRNA(Arg) + L-arginine + ATP = L-arginyl-tRNA(Arg) + AMP + diphosphate. This Aliivibrio fischeri (strain ATCC 700601 / ES114) (Vibrio fischeri) protein is Arginine--tRNA ligase.